We begin with the raw amino-acid sequence, 415 residues long: Probable cytosolic iron-sulfur protein assembly protein 1 (415 aa).

Residues 9-48 (AHDDKVWSLSSHPTLPLLATASTDKCSNIYRLSCSNASSS) form a WD 1 repeat. Positions 45 to 70 (ASSSSSSSSPPSPPSPPSSSSPRRNF) are disordered. Over residues 54 to 63 (PPSPPSPPSS) the composition is skewed to pro residues. 6 WD repeats span residues 79-131 (THRR…DDNT), 160-200 (GHEN…EEFE), 207-246 (DHTQDVKHVTWHPTRNLLASSSYDDTIRVYKQEFDDDEWS), 253-300 (GHEG…GFNG), 335-374 (IHTHAIYSVAWSSSSGKIATAGSDGRIVVYKETNAGWEVE), and 380-415 (AHGVYEINCVIWAKLDLDQEVLISGGDDGNVNIWEV).

This sequence belongs to the WD repeat CIA1 family. As to quaternary structure, interacts with NAR1.

The protein resides in the cytoplasm. Its subcellular location is the nucleus. Its function is as follows. Essential component of the cytosolic iron-sulfur (Fe/S) protein assembly machinery. Required for the maturation of extramitochondrial Fe/S proteins. The sequence is that of Probable cytosolic iron-sulfur protein assembly protein 1 from Lodderomyces elongisporus (strain ATCC 11503 / CBS 2605 / JCM 1781 / NBRC 1676 / NRRL YB-4239) (Yeast).